A 394-amino-acid chain; its full sequence is 1-deoxy-D-xylulose 5-phosphate reductoisomerase (394 aa).

NADPH contacts are provided by Thr12, Gly13, Ser14, Ile15, Lys39, Gln40, and Asn126. Lys127 contacts 1-deoxy-D-xylulose 5-phosphate. Glu128 serves as a coordination point for NADPH. Residue Asp152 coordinates Mn(2+). Residues Ser153, Glu154, Ser183, and His206 each coordinate 1-deoxy-D-xylulose 5-phosphate. Glu154 lines the Mn(2+) pocket. An NADPH-binding site is contributed by Gly212. 1-deoxy-D-xylulose 5-phosphate is bound by residues Ser219, Asn224, Lys225, and Glu228. Glu228 contacts Mn(2+).

It belongs to the DXR family. Mg(2+) serves as cofactor. Mn(2+) is required as a cofactor.

It carries out the reaction 2-C-methyl-D-erythritol 4-phosphate + NADP(+) = 1-deoxy-D-xylulose 5-phosphate + NADPH + H(+). The protein operates within isoprenoid biosynthesis; isopentenyl diphosphate biosynthesis via DXP pathway; isopentenyl diphosphate from 1-deoxy-D-xylulose 5-phosphate: step 1/6. Functionally, catalyzes the NADPH-dependent rearrangement and reduction of 1-deoxy-D-xylulose-5-phosphate (DXP) to 2-C-methyl-D-erythritol 4-phosphate (MEP). The protein is 1-deoxy-D-xylulose 5-phosphate reductoisomerase of Neisseria gonorrhoeae (strain ATCC 700825 / FA 1090).